The following is a 348-amino-acid chain: D-alanine--D-alanine ligase (348 aa).

The ATP-grasp domain maps to 132–334; the sequence is KRVLESAGIP…YSDLIEELVS (203 aa). 162-217 is a binding site for ATP; that stretch reads LETLSFPIFVKPANMGSSVGISKAESIEGLREAIALALKYDSRILIEQGVVAREIE. Mg(2+) contacts are provided by aspartate 288, glutamate 301, and asparagine 303.

The protein belongs to the D-alanine--D-alanine ligase family. Requires Mg(2+) as cofactor. Mn(2+) is required as a cofactor.

It localises to the cytoplasm. The catalysed reaction is 2 D-alanine + ATP = D-alanyl-D-alanine + ADP + phosphate + H(+). It participates in cell wall biogenesis; peptidoglycan biosynthesis. Its function is as follows. Cell wall formation. In Streptococcus uberis (strain ATCC BAA-854 / 0140J), this protein is D-alanine--D-alanine ligase.